The chain runs to 793 residues: DnaJ homolog subfamily C member 10 (793 aa).

The signal sequence occupies residues 1 to 32; sequence MGVWLNRDEFIRDVKRISLCLLVLYVVIVVGT. The 66-residue stretch at 35–100 folds into the J domain; it reads NFYSLLGVSK…DLRKKYDKYG (66 aa). Residues 130 to 232 form the Thioredoxin 1 domain; that stretch reads EIITLERREF…ESLVSFAMQH (103 aa). Cys-158 and Cys-161 are oxidised to a cystine. Trxb stretches follow at residues 235–350 and 348–463; these read TTVT…LPDF and PDFE…PQNF. 3 consecutive Thioredoxin domains span residues 454–553, 557–665, and 671–776; these read HVTT…IEDL, SVVS…SWGL, and ASID…ALIY. Cys-480 and Cys-483 form a disulfide bridge. A glycan (N-linked (GlcNAc...) asparagine) is linked at Asn-530. 2 disulfide bridges follow: Cys-588/Cys-591 and Cys-700/Cys-703. The Prevents secretion from ER signature appears at 790–793; sequence KDEL.

Interacts with HSPA5 (via its J domain). Interacts with EDEM1.

It is found in the endoplasmic reticulum lumen. In terms of biological role, endoplasmic reticulum disulfide reductase involved both in the correct folding of proteins and degradation of misfolded proteins. Required for efficient folding of proteins in the endoplasmic reticulum by catalyzing the removal of non-native disulfide bonds formed during the folding of proteins, such as LDLR. Also involved in endoplasmic reticulum-associated degradation (ERAD) by reducing incorrect disulfide bonds in misfolded glycoproteins recognized by EDEM1. Interaction with HSPA5 is required its activity, not for the disulfide reductase activity, but to facilitate the release of DNAJC10 from its substrate. Promotes apoptotic signaling pathway in response to endoplasmic reticulum stress. In Rattus norvegicus (Rat), this protein is DnaJ homolog subfamily C member 10 (Dnajc10).